A 436-amino-acid polypeptide reads, in one-letter code: POU domain, class 2, transcription factor 3 (436 aa).

3 disordered regions span residues 1 to 40 (MVNLESMHTDIKMSGDVADSTDARSTLSQVEPGNDRNGLD), 140 to 186 (QTGP…DEPS), and 256 to 278 (AESSPSDPSVSTPSSYPSLSEVF). Positions 183–257 (DEPSDLEELE…LLEKWLNDAE (75 aa)) constitute a POU-specific domain. The span at 258–275 (SSPSDPSVSTPSSYPSLS) shows a compositional bias: low complexity. A DNA-binding region (homeobox) is located at residues 281–340 (KRKKRTSIETNIRLTLEKRFQDNPKPSSEEISMIAEQLSMEKEVVRVWFCNRRQKEKRIN). The disordered stretch occupies residues 363–421 (LGPLSVPPVHSTMPGTVTSSCSPGNNSRPSSPGSGLHASSPTASQNNSKAAVNSASSFN). Low complexity-rich tracts occupy residues 381 to 397 (SSCSPGNNSRPSSPGSG) and 405 to 421 (ASQNNSKAAVNSASSFN).

The protein belongs to the POU transcription factor family. Class-2 subfamily. Interacts (via the POU domain) with POU2AF1 and POU2AF2 in a DNA-dependent manner; this interaction recruits POU2AF2 to chromatin and increases POU2F3 transactivation activity. As to expression, specifically expressed in epidermis and cultured keratinocytes.

The protein resides in the nucleus. Its function is as follows. Transcription factor that binds to the octamer motif (5'-ATTTGCAT-3') and regulates cell type-specific differentiation pathways. Involved in the regulation of keratinocytes differentiation. The POU2F3-POU2AF2/POU2AF3 complex drives the expression of tuft-cell-specific genes, a rare chemosensory cells that coordinate immune and neural functions within mucosal epithelial tissues. This is POU domain, class 2, transcription factor 3 from Homo sapiens (Human).